Here is a 303-residue protein sequence, read N- to C-terminus: Zinc import ATP-binding protein ZnuC (303 aa).

Positions 17 to 232 constitute an ABC transporter domain; it reads VSLENVGVLR…PEYVRLFGSR (216 aa). An ATP-binding site is contributed by 49–56; that stretch reads GPNGSGKS. Positions 263 to 303 are disordered; that stretch reads DHCHPDDGHHAHEHGHAGHEHDHDHPDHAHPHAHEAGERHA.

This sequence belongs to the ABC transporter superfamily. Zinc importer (TC 3.A.1.15.5) family. The complex is composed of two ATP-binding proteins (ZnuC), two transmembrane proteins (ZnuB) and a solute-binding protein (ZnuA).

It is found in the cell inner membrane. The catalysed reaction is Zn(2+)(out) + ATP(in) + H2O(in) = Zn(2+)(in) + ADP(in) + phosphate(in) + H(+)(in). Part of the ABC transporter complex ZnuABC involved in zinc import. Responsible for energy coupling to the transport system. The protein is Zinc import ATP-binding protein ZnuC of Rhizobium johnstonii (strain DSM 114642 / LMG 32736 / 3841) (Rhizobium leguminosarum bv. viciae).